The following is a 345-amino-acid chain: MDDNKKKSLDLALKQIDKAFGKGTVLRLGDKEIEPIDSISSGSIGLDIALGIGGVPKGRIVEIYGPESSGKTTLTLHLIAESQKVGGVCAFVDAEHALDVKYAKNLGVDTDNLYISQPDFGEQALDIVETLARSGAVDLIVIDSVAALTPKSEIEGDMGDQHVGLQARLMSQALRKLTGVVHKMGTTVVFINQIRMKIGAMGYGTPETTTGGNALKFYASVRLDVRKIATLKQSDEPIGNRVKVKVVKNKVAPPFRQAEFDIMFGEGISKEGEIIDYGVKLDIIDKSGAWFSYDNSKLGQGRENSKAFLKENKAIADEITEKIRANMGDSIMSGAVDEEEMEGDE.

65-72 (GPESSGKT) lines the ATP pocket.

Belongs to the RecA family.

The protein resides in the cytoplasm. Can catalyze the hydrolysis of ATP in the presence of single-stranded DNA, the ATP-dependent uptake of single-stranded DNA by duplex DNA, and the ATP-dependent hybridization of homologous single-stranded DNAs. It interacts with LexA causing its activation and leading to its autocatalytic cleavage. The polypeptide is Protein RecA (Campylobacter fetus subsp. fetus (strain 82-40)).